Consider the following 457-residue polypeptide: Bifunctional protein GlmU (457 aa).

The pyrophosphorylase stretch occupies residues 1 to 236; the sequence is MDQDACTHSA…DWHFLGVNTP (236 aa). UDP-N-acetyl-alpha-D-glucosamine is bound by residues 14–17, Lys-28, Gln-79, and 84–85; these read LAAG and GT. Asp-110 serves as a coordination point for Mg(2+). Positions 145, 159, 176, and 234 each coordinate UDP-N-acetyl-alpha-D-glucosamine. Mg(2+) is bound at residue Asn-234. The segment at 237-257 is linker; the sequence is KDLSYVESIQQAFIIEKLLQS. Residues 258–457 are N-acetyltransferase; the sequence is GVIIHSPESV…GKQKNFSKRK (200 aa). The UDP-N-acetyl-alpha-D-glucosamine site is built by Arg-340 and Lys-358. The active-site Proton acceptor is the His-370. Positions 373 and 384 each coordinate UDP-N-acetyl-alpha-D-glucosamine. Acetyl-CoA is bound by residues Ala-387, 393-394, Ser-412, Ala-430, and Arg-447; that span reads NY.

It in the N-terminal section; belongs to the N-acetylglucosamine-1-phosphate uridyltransferase family. This sequence in the C-terminal section; belongs to the transferase hexapeptide repeat family. Homotrimer. The cofactor is Mg(2+).

The protein localises to the cytoplasm. It carries out the reaction alpha-D-glucosamine 1-phosphate + acetyl-CoA = N-acetyl-alpha-D-glucosamine 1-phosphate + CoA + H(+). The catalysed reaction is N-acetyl-alpha-D-glucosamine 1-phosphate + UTP + H(+) = UDP-N-acetyl-alpha-D-glucosamine + diphosphate. It participates in nucleotide-sugar biosynthesis; UDP-N-acetyl-alpha-D-glucosamine biosynthesis; N-acetyl-alpha-D-glucosamine 1-phosphate from alpha-D-glucosamine 6-phosphate (route II): step 2/2. The protein operates within nucleotide-sugar biosynthesis; UDP-N-acetyl-alpha-D-glucosamine biosynthesis; UDP-N-acetyl-alpha-D-glucosamine from N-acetyl-alpha-D-glucosamine 1-phosphate: step 1/1. Its pathway is bacterial outer membrane biogenesis; LPS lipid A biosynthesis. Functionally, catalyzes the last two sequential reactions in the de novo biosynthetic pathway for UDP-N-acetylglucosamine (UDP-GlcNAc). The C-terminal domain catalyzes the transfer of acetyl group from acetyl coenzyme A to glucosamine-1-phosphate (GlcN-1-P) to produce N-acetylglucosamine-1-phosphate (GlcNAc-1-P), which is converted into UDP-GlcNAc by the transfer of uridine 5-monophosphate (from uridine 5-triphosphate), a reaction catalyzed by the N-terminal domain. The polypeptide is Bifunctional protein GlmU (Lawsonia intracellularis (strain PHE/MN1-00)).